The chain runs to 469 residues: RuvB-like helicase 2 (469 aa).

76 to 83 (GPPSTGKT) contributes to the ATP binding site.

It belongs to the RuvB family. May form heterododecamers with RVB1. Component of the SWR1 chromatin remodeling complex, the INO80 chromatin remodeling complex, and of the R2TP complex.

The protein resides in the nucleus. The catalysed reaction is ATP + H2O = ADP + phosphate + H(+). In terms of biological role, DNA helicase which participates in several chromatin remodeling complexes, including the SWR1 and the INO80 complexes. The SWR1 complex mediates the ATP-dependent exchange of histone H2A for the H2A variant HZT1 leading to transcriptional regulation of selected genes by chromatin remodeling. The INO80 complex remodels chromatin by shifting nucleosomes and is involved in DNA repair. Also involved in pre-rRNA processing. The sequence is that of RuvB-like helicase 2 (rvb2) from Aspergillus fumigatus (strain ATCC MYA-4609 / CBS 101355 / FGSC A1100 / Af293) (Neosartorya fumigata).